The primary structure comprises 180 residues: MKEHVLNQKKAVVEEIKGHINDAKSMVIVDYRGLDVSEATELREKFRNENVLFKVYKNTMMNFAFKELGFEGFLDYLSGPNAVAFSMDDPIAAARIAKEFAADHENLEIKAGYLGDKFLDVEGVKKIASIPSREVLLTKMLGSFKAPVSKFVYLADAIAKSKAEGSEETESNETTETVEE.

The tract at residues 161–180 (SKAEGSEETESNETTETVEE) is disordered. Acidic residues predominate over residues 166-180 (SEETESNETTETVEE).

It belongs to the universal ribosomal protein uL10 family. In terms of assembly, part of the ribosomal stalk of the 50S ribosomal subunit. The N-terminus interacts with L11 and the large rRNA to form the base of the stalk. The C-terminus forms an elongated spine to which L12 dimers bind in a sequential fashion forming a multimeric L10(L12)X complex.

In terms of biological role, forms part of the ribosomal stalk, playing a central role in the interaction of the ribosome with GTP-bound translation factors. The chain is Large ribosomal subunit protein uL10 from Finegoldia magna (strain ATCC 29328 / DSM 20472 / WAL 2508) (Peptostreptococcus magnus).